A 496-amino-acid polypeptide reads, in one-letter code: Maturase K (496 aa).

Belongs to the intron maturase 2 family. MatK subfamily.

It is found in the plastid. It localises to the chloroplast. Its function is as follows. Usually encoded in the trnK tRNA gene intron. Probably assists in splicing its own and other chloroplast group II introns. In Paeonia suffruticosa (Tree peony), this protein is Maturase K.